The sequence spans 584 residues: Arginine--tRNA ligase (584 aa).

The 'HIGH' region motif lies at 126–136 (PNIAKEMHVGH).

The protein belongs to the class-I aminoacyl-tRNA synthetase family. Monomer.

It localises to the cytoplasm. It catalyses the reaction tRNA(Arg) + L-arginine + ATP = L-arginyl-tRNA(Arg) + AMP + diphosphate. In Synechocystis sp. (strain ATCC 27184 / PCC 6803 / Kazusa), this protein is Arginine--tRNA ligase (argS).